The following is a 787-amino-acid chain: Endonuclease MutS2 (787 aa).

329-336 provides a ligand contact to ATP; it reads GPNTGGKT. The Smr domain maps to 712-787; the sequence is INLLGCTVDE…DAGVTIVDFK (76 aa).

This sequence belongs to the DNA mismatch repair MutS family. MutS2 subfamily. Homodimer. Binds to stalled ribosomes, contacting rRNA.

Endonuclease that is involved in the suppression of homologous recombination and thus may have a key role in the control of bacterial genetic diversity. In terms of biological role, acts as a ribosome collision sensor, splitting the ribosome into its 2 subunits. Detects stalled/collided 70S ribosomes which it binds and splits by an ATP-hydrolysis driven conformational change. Acts upstream of the ribosome quality control system (RQC), a ribosome-associated complex that mediates the extraction of incompletely synthesized nascent chains from stalled ribosomes and their subsequent degradation. Probably generates substrates for RQC. The protein is Endonuclease MutS2 of Lachnospira eligens (strain ATCC 27750 / DSM 3376 / VPI C15-48 / C15-B4) (Eubacterium eligens).